The following is a 315-amino-acid chain: 4-hydroxy-3-methylbut-2-enyl diphosphate reductase (315 aa).

Residue Cys-12 coordinates [4Fe-4S] cluster. Positions 40 and 74 each coordinate (2E)-4-hydroxy-3-methylbut-2-enyl diphosphate. Dimethylallyl diphosphate is bound by residues His-40 and His-74. Isopentenyl diphosphate is bound by residues His-40 and His-74. [4Fe-4S] cluster is bound at residue Cys-96. His-124 contacts (2E)-4-hydroxy-3-methylbut-2-enyl diphosphate. His-124 provides a ligand contact to dimethylallyl diphosphate. Residue His-124 coordinates isopentenyl diphosphate. Glu-126 serves as the catalytic Proton donor. (2E)-4-hydroxy-3-methylbut-2-enyl diphosphate is bound at residue Thr-167. Residue Cys-213 participates in [4Fe-4S] cluster binding. Residues Ser-241, Ser-242, Asn-243, and Ser-290 each contribute to the (2E)-4-hydroxy-3-methylbut-2-enyl diphosphate site. The dimethylallyl diphosphate site is built by Ser-241, Ser-242, Asn-243, and Ser-290. Isopentenyl diphosphate-binding residues include Ser-241, Ser-242, Asn-243, and Ser-290.

Belongs to the IspH family. [4Fe-4S] cluster serves as cofactor.

It catalyses the reaction isopentenyl diphosphate + 2 oxidized [2Fe-2S]-[ferredoxin] + H2O = (2E)-4-hydroxy-3-methylbut-2-enyl diphosphate + 2 reduced [2Fe-2S]-[ferredoxin] + 2 H(+). The catalysed reaction is dimethylallyl diphosphate + 2 oxidized [2Fe-2S]-[ferredoxin] + H2O = (2E)-4-hydroxy-3-methylbut-2-enyl diphosphate + 2 reduced [2Fe-2S]-[ferredoxin] + 2 H(+). Its pathway is isoprenoid biosynthesis; dimethylallyl diphosphate biosynthesis; dimethylallyl diphosphate from (2E)-4-hydroxy-3-methylbutenyl diphosphate: step 1/1. It participates in isoprenoid biosynthesis; isopentenyl diphosphate biosynthesis via DXP pathway; isopentenyl diphosphate from 1-deoxy-D-xylulose 5-phosphate: step 6/6. In terms of biological role, catalyzes the conversion of 1-hydroxy-2-methyl-2-(E)-butenyl 4-diphosphate (HMBPP) into a mixture of isopentenyl diphosphate (IPP) and dimethylallyl diphosphate (DMAPP). Acts in the terminal step of the DOXP/MEP pathway for isoprenoid precursor biosynthesis. This Chloroherpeton thalassium (strain ATCC 35110 / GB-78) protein is 4-hydroxy-3-methylbut-2-enyl diphosphate reductase.